A 59-amino-acid polypeptide reads, in one-letter code: Preprotein translocase subunit SecG (59 aa).

Residues 1 to 33 are Cytoplasmic-facing; the sequence is MARRESSGGSGGLMSSAGLMRYFEAEESAIKID. The chain crosses the membrane as a helical span at residues 34-55; sequence PKTVIIAAVASGAFIWILNFTY. Over 56–59 the chain is Extracellular; that stretch reads GRFW.

It belongs to the SEC61-beta family. As to quaternary structure, component of the protein translocase complex. Heterotrimer consisting of alpha (SecY), beta (SecG) and gamma (SecE) subunits. Can form oligomers of the heterotrimer.

The protein localises to the cell membrane. Involved in protein export. The function of the beta subunit is unknown, but it may be involved in stabilization of the trimeric complex. This Methanocella arvoryzae (strain DSM 22066 / NBRC 105507 / MRE50) protein is Preprotein translocase subunit SecG.